A 1091-amino-acid polypeptide reads, in one-letter code: ATP-dependent helicase/deoxyribonuclease subunit B (1091 aa).

This sequence belongs to the helicase family. AddB/RexB type 2 subfamily. Heterodimer of AddA and RexB. The cofactor is Mg(2+).

In terms of biological role, the heterodimer acts as both an ATP-dependent DNA helicase and an ATP-dependent, dual-direction single-stranded exonuclease. Recognizes the chi site generating a DNA molecule suitable for the initiation of homologous recombination. This subunit has 5' -&gt; 3' nuclease activity but not helicase activity. The sequence is that of ATP-dependent helicase/deoxyribonuclease subunit B from Streptococcus pneumoniae (strain ATCC 700669 / Spain 23F-1).